Consider the following 488-residue polypeptide: Solute carrier family 41 member 3 (488 aa).

Basic and acidic residues-rich tracts occupy residues 1–19 and 27–36; these read MEGTEARQRRLEGCGRLKE and DAGRLPKASE. The interval 1-36 is disordered; that stretch reads MEGTEARQRRLEGCGRLKELGPLPSHDAGRLPKASE. 9 consecutive transmembrane segments (helical) span residues 63–83, 147–167, 189–209, 220–240, 251–271, 284–304, 377–397, 406–426, and 450–470; these read LIIGFQVVIPFLLAGVGLSWA, LAVVQVQATVVGLLAAVASLM, VITAFLAALALGILMICIVIG, IATPIAASLGDLITLSILALM, WYLTPLVCVGFLALTPLWLFI, YGWFPIILAMIISSFGGLILS, VLLFLVVPGHLIFFYLICLVE, IFILLYLVAGVVQVVILLYLA, and GLGDLLGTSLLALCFFLDWLL.

It belongs to the SLC41A transporter family.

The protein resides in the mitochondrion inner membrane. The catalysed reaction is Mg(2+)(in) + 2 Na(+)(out) = Mg(2+)(out) + 2 Na(+)(in). Na(+)/Mg(2+) ion exchanger that acts as a predominant Mg(2+) efflux system at the mitochondrial inner membrane. The chain is Solute carrier family 41 member 3 (Slc41a3) from Mus musculus (Mouse).